The sequence spans 567 residues: Urease subunit alpha (567 aa).

Residues 128 to 567 (GGVDTHVHYI…LPLAQRYHLF (440 aa)) enclose the Urease domain. 3 residues coordinate Ni(2+): H133, H135, and K216. An N6-carboxylysine modification is found at K216. H218 contributes to the substrate binding site. Ni(2+) contacts are provided by H245 and H271. Residue H319 is the Proton donor of the active site. Residue D359 coordinates Ni(2+).

Belongs to the metallo-dependent hydrolases superfamily. Urease alpha subunit family. Heterotrimer of UreA (gamma), UreB (beta) and UreC (alpha) subunits. Three heterotrimers associate to form the active enzyme. It depends on Ni cation as a cofactor. In terms of processing, carboxylation allows a single lysine to coordinate two nickel ions.

The protein resides in the cytoplasm. The enzyme catalyses urea + 2 H2O + H(+) = hydrogencarbonate + 2 NH4(+). It participates in nitrogen metabolism; urea degradation; CO(2) and NH(3) from urea (urease route): step 1/1. The sequence is that of Urease subunit alpha from Pseudoalteromonas translucida (strain TAC 125).